We begin with the raw amino-acid sequence, 340 residues long: Cytosolic Fe-S cluster assembly factor NBP35 (340 aa).

Residues C31, C45, C48, and C54 each contribute to the [4Fe-4S] cluster site. 84-91 (GKGGVGKS) is a binding site for ATP. Residues C257 and C260 each coordinate [4Fe-4S] cluster.

It belongs to the Mrp/NBP35 ATP-binding proteins family. NUBP1/NBP35 subfamily. In terms of assembly, heterotetramer of 2 NBP35 and 2 CFD1 chains. The cofactor is [4Fe-4S] cluster.

The protein localises to the cytoplasm. Its function is as follows. Component of the cytosolic iron-sulfur (Fe/S) protein assembly (CIA) machinery. Required for maturation of extramitochondrial Fe-S proteins. The NBP35-CFD1 heterotetramer forms a Fe-S scaffold complex, mediating the de novo assembly of an Fe-S cluster and its transfer to target apoproteins. The sequence is that of Cytosolic Fe-S cluster assembly factor NBP35 from Phaeosphaeria nodorum (strain SN15 / ATCC MYA-4574 / FGSC 10173) (Glume blotch fungus).